The sequence spans 180 residues: Large ribosomal subunit protein uL6 (180 aa).

The protein belongs to the universal ribosomal protein uL6 family. In terms of assembly, part of the 50S ribosomal subunit.

This protein binds to the 23S rRNA, and is important in its secondary structure. It is located near the subunit interface in the base of the L7/L12 stalk, and near the tRNA binding site of the peptidyltransferase center. This Clostridium beijerinckii (strain ATCC 51743 / NCIMB 8052) (Clostridium acetobutylicum) protein is Large ribosomal subunit protein uL6.